A 136-amino-acid polypeptide reads, in one-letter code: Histone H3 (136 aa).

Residues 1-42 (MARTKQTARKSTGGKAPRKQLATKAAAKSAPATGGVKKPHRY) are disordered. Residue lysine 5 is modified to N6-methylated lysine. Lysine 10 bears the N6-acetyllysine; alternate mark. Lysine 10 carries the N6-methylated lysine; alternate modification. Serine 11 is subject to Phosphoserine. 2 positions are modified to N6-acetyllysine: lysine 15 and lysine 24. A compositionally biased stretch (low complexity) spans 22-33 (ATKAAAKSAPAT). Lysine 28, lysine 37, and lysine 80 each carry N6-methylated lysine.

It belongs to the histone H3 family. As to quaternary structure, the nucleosome is a histone octamer containing two molecules each of H2A, H2B, H3 and H4 assembled in one H3-H4 heterotetramer and two H2A-H2B heterodimers. The octamer wraps approximately 147 bp of DNA. Post-translationally, acetylation is generally linked to gene activation. Methylation at Lys-5 is linked to gene activation. Methylation at Lys-10 is linked to gene repression.

The protein resides in the nucleus. It localises to the chromosome. Functionally, core component of nucleosome. Nucleosomes wrap and compact DNA into chromatin, limiting DNA accessibility to the cellular machineries which require DNA as a template. Histones thereby play a central role in transcription regulation, DNA repair, DNA replication and chromosomal stability. DNA accessibility is regulated via a complex set of post-translational modifications of histones, also called histone code, and nucleosome remodeling. The protein is Histone H3 of Acropora formosa (Staghorn coral).